A 178-amino-acid chain; its full sequence is Large ribosomal subunit protein uL6 (178 aa).

It belongs to the universal ribosomal protein uL6 family. As to quaternary structure, part of the 50S ribosomal subunit.

In terms of biological role, this protein binds to the 23S rRNA, and is important in its secondary structure. It is located near the subunit interface in the base of the L7/L12 stalk, and near the tRNA binding site of the peptidyltransferase center. This is Large ribosomal subunit protein uL6 from Lactococcus lactis subsp. lactis (strain IL1403) (Streptococcus lactis).